A 152-amino-acid polypeptide reads, in one-letter code: MSFNIFIASDHTGLTLKKIISEHLKTKQFNVVDLGPNYFDANDDYPDFAFLVADKVKKNSDKDLGILICGTGVGVCMAANKVKGVLAALVVSEKTAALARQHDNANVLCLSSRFVTDSENIKIVDDFLKANFEGGRHQRRIDKIIRYEKETE.

Residue 10–11 coordinates D-ribulose 5-phosphate; it reads DH. The active-site Proton acceptor is the Cys-69. 70-74 is a D-ribulose 5-phosphate binding site; that stretch reads GTGVG. His-102 (proton donor) is an active-site residue. Positions 103, 113, 136, and 140 each coordinate D-ribulose 5-phosphate.

It belongs to the LacAB/RpiB family. In terms of assembly, homodimer.

It catalyses the reaction aldehydo-D-ribose 5-phosphate = D-ribulose 5-phosphate. It functions in the pathway carbohydrate degradation; pentose phosphate pathway; D-ribose 5-phosphate from D-ribulose 5-phosphate (non-oxidative stage): step 1/1. Catalyzes the interconversion of ribulose-5-P and ribose-5-P. This chain is Probable ribose-5-phosphate isomerase B, found in Mycoplasma genitalium (strain ATCC 33530 / DSM 19775 / NCTC 10195 / G37) (Mycoplasmoides genitalium).